A 127-amino-acid chain; its full sequence is Fluoride-specific ion channel FluC 1 (127 aa).

Transmembrane regions (helical) follow at residues 4–24, 35–55, 71–91, and 101–121; these read TLLA…LVSL, VGTL…LALF, TGFC…VYLI, and GTIL…FILV. Na(+) is bound by residues glycine 75 and threonine 78.

This sequence belongs to the fluoride channel Fluc/FEX (TC 1.A.43) family.

It is found in the cell inner membrane. The enzyme catalyses fluoride(in) = fluoride(out). Its activity is regulated as follows. Na(+) is not transported, but it plays an essential structural role and its presence is essential for fluoride channel function. Fluoride-specific ion channel. Important for reducing fluoride concentration in the cell, thus reducing its toxicity. The polypeptide is Fluoride-specific ion channel FluC 1 (Yersinia pseudotuberculosis serotype I (strain IP32953)).